The primary structure comprises 101 residues: MKEQKIRVKLKAFDIELIDQSAQSIVASVKKTGARVSGPIPLPTSIRKVTVIRSPHVNIKSREQFEMRVYKRLIDIFDVTPQTTESLKKLALPAGVDVQLK.

This sequence belongs to the universal ribosomal protein uS10 family. As to quaternary structure, part of the 30S ribosomal subunit.

In terms of biological role, involved in the binding of tRNA to the ribosomes. This Brachyspira pilosicoli (Serpulina pilosicoli) protein is Small ribosomal subunit protein uS10.